Here is a 158-residue protein sequence, read N- to C-terminus: Endoribonuclease YbeY (158 aa).

3 residues coordinate Zn(2+): histidine 124, histidine 128, and histidine 134.

It belongs to the endoribonuclease YbeY family. Requires Zn(2+) as cofactor.

It localises to the cytoplasm. In terms of biological role, single strand-specific metallo-endoribonuclease involved in late-stage 70S ribosome quality control and in maturation of the 3' terminus of the 16S rRNA. This Caldicellulosiruptor saccharolyticus (strain ATCC 43494 / DSM 8903 / Tp8T 6331) protein is Endoribonuclease YbeY.